Here is a 240-residue protein sequence, read N- to C-terminus: Ribosomal RNA small subunit methyltransferase G (240 aa).

Residues G80, F85, 131 to 132 (AE), and R150 each bind S-adenosyl-L-methionine.

This sequence belongs to the methyltransferase superfamily. RNA methyltransferase RsmG family.

The protein localises to the cytoplasm. Specifically methylates the N7 position of a guanine in 16S rRNA. The chain is Ribosomal RNA small subunit methyltransferase G from Dictyoglomus thermophilum (strain ATCC 35947 / DSM 3960 / H-6-12).